A 136-amino-acid chain; its full sequence is Translation initiation factor 5A (136 aa).

At lysine 38 the chain carries Hypusine.

It belongs to the eIF-5A family.

It is found in the cytoplasm. Functionally, functions by promoting the formation of the first peptide bond. The chain is Translation initiation factor 5A from Methanopyrus kandleri (strain AV19 / DSM 6324 / JCM 9639 / NBRC 100938).